The sequence spans 353 residues: Photosystem II D2 protein (353 aa).

Thr-2 carries the post-translational modification N-acetylthreonine. Position 2 is a phosphothreonine (Thr-2). A helical transmembrane segment spans residues 41 to 61; that stretch reads TAYFALGGWFTGTTFVTSWYT. His-118 is a binding site for chlorophyll a. Residues 125–141 traverse the membrane as a helical segment; sequence GFMLRQFELARSVQLRP. 2 residues coordinate pheophytin a: Gln-130 and Asn-143. The chain crosses the membrane as a helical span at residues 153–166; that stretch reads VFVSVFLIYPLGQS. His-198 serves as a coordination point for chlorophyll a. A helical membrane pass occupies residues 208-228; it reads AALLCAIHGATVENTLFEDGD. A plastoquinone is bound by residues His-215 and Phe-262. His-215 is a Fe cation binding site. Residue His-269 coordinates Fe cation. Residues 279 to 295 form a helical membrane-spanning segment; sequence GLWMSAIGVVGLALNLR.

This sequence belongs to the reaction center PufL/M/PsbA/D family. As to quaternary structure, PSII is composed of 1 copy each of membrane proteins PsbA, PsbB, PsbC, PsbD, PsbE, PsbF, PsbH, PsbI, PsbJ, PsbK, PsbL, PsbM, PsbT, PsbX, PsbY, PsbZ, Psb30/Ycf12, at least 3 peripheral proteins of the oxygen-evolving complex and a large number of cofactors. It forms dimeric complexes. Requires The D1/D2 heterodimer binds P680, chlorophylls that are the primary electron donor of PSII, and subsequent electron acceptors. It shares a non-heme iron and each subunit binds pheophytin, quinone, additional chlorophylls, carotenoids and lipids. There is also a Cl(-1) ion associated with D1 and D2, which is required for oxygen evolution. The PSII complex binds additional chlorophylls, carotenoids and specific lipids. as cofactor.

The protein localises to the plastid. It is found in the chloroplast thylakoid membrane. It carries out the reaction 2 a plastoquinone + 4 hnu + 2 H2O = 2 a plastoquinol + O2. In terms of biological role, photosystem II (PSII) is a light-driven water:plastoquinone oxidoreductase that uses light energy to abstract electrons from H(2)O, generating O(2) and a proton gradient subsequently used for ATP formation. It consists of a core antenna complex that captures photons, and an electron transfer chain that converts photonic excitation into a charge separation. The D1/D2 (PsbA/PsbD) reaction center heterodimer binds P680, the primary electron donor of PSII as well as several subsequent electron acceptors. D2 is needed for assembly of a stable PSII complex. This is Photosystem II D2 protein from Adiantum capillus-veneris (Maidenhair fern).